The following is a 302-amino-acid chain: UDP-N-acetylenolpyruvoylglucosamine reductase (302 aa).

The region spanning 23-188 (KVGGNAEIFF…LKAVFKVNKG (166 aa)) is the FAD-binding PCMH-type domain. Residue Arg-168 is part of the active site. Catalysis depends on Ser-217, which acts as the Proton donor. Glu-287 is a catalytic residue.

The protein belongs to the MurB family. Requires FAD as cofactor.

The protein localises to the cytoplasm. It carries out the reaction UDP-N-acetyl-alpha-D-muramate + NADP(+) = UDP-N-acetyl-3-O-(1-carboxyvinyl)-alpha-D-glucosamine + NADPH + H(+). It functions in the pathway cell wall biogenesis; peptidoglycan biosynthesis. Cell wall formation. The sequence is that of UDP-N-acetylenolpyruvoylglucosamine reductase from Rickettsia bellii (strain RML369-C).